The chain runs to 233 residues: Small ribosomal subunit protein uS7m (233 aa).

Residues 1-28 constitute a mitochondrion transit peptide; the sequence is MAAPTGKLLVHRIRAGLTCLTQVRWSRY.

Belongs to the universal ribosomal protein uS7 family. As to quaternary structure, component of the mitochondrial ribosome small subunit (28S) which comprises a 12S rRNA and about 30 distinct proteins.

Its subcellular location is the mitochondrion. The polypeptide is Small ribosomal subunit protein uS7m (mrps7) (Xenopus laevis (African clawed frog)).